The primary structure comprises 284 residues: Pantothenate synthetase (284 aa).

Position 30–37 (30–37) interacts with ATP; it reads MGALHNGH. His37 functions as the Proton donor in the catalytic mechanism. Gln61 is a binding site for (R)-pantoate. Gln61 lines the beta-alanine pocket. 147–150 lines the ATP pocket; that stretch reads GEKD. Residue Gln153 participates in (R)-pantoate binding. ATP is bound by residues Leu176 and 184 to 187; that span reads SSSR.

It belongs to the pantothenate synthetase family. Homodimer.

Its subcellular location is the cytoplasm. The enzyme catalyses (R)-pantoate + beta-alanine + ATP = (R)-pantothenate + AMP + diphosphate + H(+). It functions in the pathway cofactor biosynthesis; (R)-pantothenate biosynthesis; (R)-pantothenate from (R)-pantoate and beta-alanine: step 1/1. Functionally, catalyzes the condensation of pantoate with beta-alanine in an ATP-dependent reaction via a pantoyl-adenylate intermediate. The sequence is that of Pantothenate synthetase from Bartonella henselae (strain ATCC 49882 / DSM 28221 / CCUG 30454 / Houston 1) (Rochalimaea henselae).